Consider the following 298-residue polypeptide: Cyclic dof factor 1 (298 aa).

Residues 27 to 46 (EEEEKNQNKTLTDQSEKDKT) form a disordered region. Residues 54-108 (LPCPRCNSMETKFCYYNNYNVNQPRHFCKACQRYWTSGGTMRSVPIGAGRRKNKN) form a Dof-type zinc finger. Positions 56, 59, 81, and 84 each coordinate Zn(2+). Residues 200 to 231 (SSSPTSTLGKHSRDEDETVKQKQRNGSVLVPK) are disordered. The segment covering 210–219 (HSRDEDETVK) has biased composition (basic and acidic residues).

In terms of assembly, interacts with ADO2 (via kelch repeats), ADO3 (via kelch repeats) and GI (via N-terminus). In terms of processing, ubiquitinated. Expressed in the vascular tissues of cotyledons, leaves and hypocotyls and in stomata. Not detected in roots.

The protein resides in the nucleus. Its function is as follows. Transcription factor that binds specifically to a 5'-AA[AG]G-3' consensus core sequence. A flanking TGT sequence contributes to the specificity of binding. Regulates a photoperiodic flowering response. Transcriptional repressor of 'CONSTANS' expression. The DNA-binding ability is not modulated by 'GIGANTEA' but the stability of CDF1 is controlled by the proteasome-dependent pathway. Ubiquitinated by the SCF(ADO3) E3 ubiquitin ligase complex. Binds to the FT promoter in the morning. This chain is Cyclic dof factor 1 (CDF1), found in Arabidopsis thaliana (Mouse-ear cress).